A 275-amino-acid polypeptide reads, in one-letter code: Orotidine 5'-phosphate decarboxylase (275 aa).

Lys-101 serves as the catalytic Proton donor.

It belongs to the OMP decarboxylase family. Type 2 subfamily.

The catalysed reaction is orotidine 5'-phosphate + H(+) = UMP + CO2. The protein operates within pyrimidine metabolism; UMP biosynthesis via de novo pathway; UMP from orotate: step 2/2. The polypeptide is Orotidine 5'-phosphate decarboxylase (Leptospira interrogans serogroup Icterohaemorrhagiae serovar Lai (strain 56601)).